Reading from the N-terminus, the 726-residue chain is DNA-directed RNA polymerase subunit beta N-terminal section (726 aa).

It belongs to the RNA polymerase beta chain family. As to quaternary structure, in plastids the minimal PEP RNA polymerase catalytic core is composed of four subunits: alpha, beta, beta', and beta''. When a (nuclear-encoded) sigma factor is associated with the core the holoenzyme is formed, which can initiate transcription.

The protein localises to the plastid. The protein resides in the chloroplast. It carries out the reaction RNA(n) + a ribonucleoside 5'-triphosphate = RNA(n+1) + diphosphate. Its function is as follows. DNA-dependent RNA polymerase catalyzes the transcription of DNA into RNA using the four ribonucleoside triphosphates as substrates. This is DNA-directed RNA polymerase subunit beta N-terminal section (rpoB1) from Tetradesmus obliquus (Green alga).